We begin with the raw amino-acid sequence, 598 residues long: Arginine--tRNA ligase (598 aa).

A 'HIGH' region motif is present at residues 131-141; the sequence is ANPTGPMHVGH. Residues 288 to 308 are disordered; it reads KLPPPKSKKGQPPAQPQPDEE.

Belongs to the class-I aminoacyl-tRNA synthetase family. In terms of assembly, monomer.

It localises to the cytoplasm. The catalysed reaction is tRNA(Arg) + L-arginine + ATP = L-arginyl-tRNA(Arg) + AMP + diphosphate. The protein is Arginine--tRNA ligase of Anaeromyxobacter sp. (strain K).